A 274-amino-acid chain; its full sequence is Small ribosomal subunit biogenesis GTPase RsgA (274 aa).

A CP-type G domain is found at 58 to 215 (KNYLNRPKVA…LVDSPGFSIY (158 aa)). Residues 108 to 111 (SKLD) and 158 to 166 (GHSGVGKST) contribute to the GTP site. Cysteine 238, cysteine 243, histidine 245, and cysteine 252 together coordinate Zn(2+).

This sequence belongs to the TRAFAC class YlqF/YawG GTPase family. RsgA subfamily. Monomer. Associates with 30S ribosomal subunit, binds 16S rRNA. Zn(2+) is required as a cofactor.

The protein localises to the cytoplasm. In terms of biological role, one of several proteins that assist in the late maturation steps of the functional core of the 30S ribosomal subunit. Helps release RbfA from mature subunits. May play a role in the assembly of ribosomal proteins into the subunit. Circularly permuted GTPase that catalyzes slow GTP hydrolysis, GTPase activity is stimulated by the 30S ribosomal subunit. This is Small ribosomal subunit biogenesis GTPase RsgA from Mycoplasmoides gallisepticum (strain R(low / passage 15 / clone 2)) (Mycoplasma gallisepticum).